Reading from the N-terminus, the 191-residue chain is MIRISDAAQAHFAKLLASQEEGTQIRVFVINPGTPNAECGVSYCPPDAVEATDTALKFDLLTAYVDELSAPYLEDAEIDFVTDQLGSQLTLKAPNAKMRKVADDAPLMERVEYMLQSQINPQLAGHGGRVTLMEITDEGYAILQFGGGCNGCSMVDVTLKEGIEKQLLNEFPELKGVRDLTEHQRGEHSYY.

Positions 149 and 152 each coordinate [4Fe-4S] cluster.

Belongs to the NfuA family. Homodimer. [4Fe-4S] cluster is required as a cofactor.

Its function is as follows. Involved in iron-sulfur cluster biogenesis. Binds a 4Fe-4S cluster, can transfer this cluster to apoproteins, and thereby intervenes in the maturation of Fe/S proteins. Could also act as a scaffold/chaperone for damaged Fe/S proteins. This Cronobacter sakazakii (strain ATCC BAA-894) (Enterobacter sakazakii) protein is Fe/S biogenesis protein NfuA.